A 171-amino-acid polypeptide reads, in one-letter code: Apoptosis regulator Bcl-2 homolog (171 aa).

As to quaternary structure, interacts with host BECN1; this interaction inhibits host autophagy. Interacts with host BAK1 and BAX.

It localises to the host cytoplasm. Its function is as follows. Plays a role in the protection against apoptosis mediated by cytotoxic cells during the immune response to acute and persistent viral infection. Contributes therefore to latency establishment. Plays also a role in the inhibition of host starvation-induced autophagy which ultimately contributes to the viral chronic infection. The protein is Apoptosis regulator Bcl-2 homolog (vBCL2) of Murid herpesvirus 4 (MuHV-4).